The following is a 353-amino-acid chain: Variable large protein 17 (353 aa).

A signal peptide spans 1-18 (MRKRISAIIMTLFMVLVS). The N-palmitoyl cysteine moiety is linked to residue cysteine 19. Residue cysteine 19 is the site of S-diacylglycerol cysteine attachment. The disordered stretch occupies residues 332–353 (EDKSVEATNTAEATTSGQQAKN). Residues 337–353 (EATNTAEATTSGQQAKN) are compositionally biased toward polar residues.

This sequence belongs to the variable large protein (Vlp) family. Delta subfamily.

It is found in the cell outer membrane. The Vlp and Vsp proteins are antigenically distinct proteins, only one vlp or vsp gene is transcriptionally active at any one time. Switching between these genes is a mechanism of host immune response evasion. The sequence is that of Variable large protein 17 from Borrelia hermsii.